The primary structure comprises 445 residues: UPF0210 protein STK_02450 (445 aa).

This sequence belongs to the UPF0210 family.

The polypeptide is UPF0210 protein STK_02450 (Sulfurisphaera tokodaii (strain DSM 16993 / JCM 10545 / NBRC 100140 / 7) (Sulfolobus tokodaii)).